The sequence spans 322 residues: Altered inheritance of mitochondria protein 32 (322 aa).

The protein belongs to the AIM32 family.

The polypeptide is Altered inheritance of mitochondria protein 32 (AIM32) (Kluyveromyces lactis (strain ATCC 8585 / CBS 2359 / DSM 70799 / NBRC 1267 / NRRL Y-1140 / WM37) (Yeast)).